The chain runs to 660 residues: DNA mismatch repair protein MutL (660 aa).

The protein belongs to the DNA mismatch repair MutL/HexB family.

In terms of biological role, this protein is involved in the repair of mismatches in DNA. It is required for dam-dependent methyl-directed DNA mismatch repair. May act as a 'molecular matchmaker', a protein that promotes the formation of a stable complex between two or more DNA-binding proteins in an ATP-dependent manner without itself being part of a final effector complex. The sequence is that of DNA mismatch repair protein MutL from Streptococcus pyogenes serotype M1.